Consider the following 179-residue polypeptide: Adenine phosphoribosyltransferase (179 aa).

Belongs to the purine/pyrimidine phosphoribosyltransferase family. Homodimer.

Its subcellular location is the cytoplasm. The enzyme catalyses AMP + diphosphate = 5-phospho-alpha-D-ribose 1-diphosphate + adenine. It functions in the pathway purine metabolism; AMP biosynthesis via salvage pathway; AMP from adenine: step 1/1. In terms of biological role, catalyzes a salvage reaction resulting in the formation of AMP, that is energically less costly than de novo synthesis. The protein is Adenine phosphoribosyltransferase of Bradyrhizobium sp. (strain ORS 278).